The sequence spans 340 residues: Ketol-acid reductoisomerase (NADP(+)) (340 aa).

One can recognise a KARI N-terminal Rossmann domain in the interval 1-182 (MRVYYDRDCD…GGGRSGIIET (182 aa)). NADP(+)-binding positions include 24-27 (YGSQ), Arg-48, Ser-51, Ser-53, and 83-86 (DELQ). The active site involves His-108. An NADP(+)-binding site is contributed by Gly-134. One can recognise a KARI C-terminal knotted domain in the interval 183 to 329 (NFREECETDL…ETLRGMMPWI (147 aa)). Residues Asp-191, Glu-195, Glu-227, and Glu-231 each coordinate Mg(2+). Ser-252 is a binding site for substrate.

It belongs to the ketol-acid reductoisomerase family. The cofactor is Mg(2+).

The catalysed reaction is (2R)-2,3-dihydroxy-3-methylbutanoate + NADP(+) = (2S)-2-acetolactate + NADPH + H(+). The enzyme catalyses (2R,3R)-2,3-dihydroxy-3-methylpentanoate + NADP(+) = (S)-2-ethyl-2-hydroxy-3-oxobutanoate + NADPH + H(+). Its pathway is amino-acid biosynthesis; L-isoleucine biosynthesis; L-isoleucine from 2-oxobutanoate: step 2/4. It functions in the pathway amino-acid biosynthesis; L-valine biosynthesis; L-valine from pyruvate: step 2/4. Involved in the biosynthesis of branched-chain amino acids (BCAA). Catalyzes an alkyl-migration followed by a ketol-acid reduction of (S)-2-acetolactate (S2AL) to yield (R)-2,3-dihydroxy-isovalerate. In the isomerase reaction, S2AL is rearranged via a Mg-dependent methyl migration to produce 3-hydroxy-3-methyl-2-ketobutyrate (HMKB). In the reductase reaction, this 2-ketoacid undergoes a metal-dependent reduction by NADPH to yield (R)-2,3-dihydroxy-isovalerate. In Roseobacter denitrificans (strain ATCC 33942 / OCh 114) (Erythrobacter sp. (strain OCh 114)), this protein is Ketol-acid reductoisomerase (NADP(+)).